A 170-amino-acid polypeptide reads, in one-letter code: Transcriptional repressor NrdR (170 aa).

The segment at 3-34 (CPFCRHPDSRVVDSRTTDDGTSIRRRRQCPDC) is a zinc-finger region. The ATP-cone domain occupies 46-136 (LMVVKRSGVT…VYRAFDSLED (91 aa)). The tract at residues 148–170 (RPSAEDRGSGETLEVPAPAIAAD) is disordered.

Belongs to the NrdR family. Zn(2+) serves as cofactor.

Functionally, negatively regulates transcription of bacterial ribonucleotide reductase nrd genes and operons by binding to NrdR-boxes. This Streptomyces griseus subsp. griseus (strain JCM 4626 / CBS 651.72 / NBRC 13350 / KCC S-0626 / ISP 5235) protein is Transcriptional repressor NrdR.